Reading from the N-terminus, the 692-residue chain is Penicillin-binding protein activator LpoA (692 aa).

Positions 1 to 26 (MLSSITVRTKSGRLIPLVLAATLLAA) are cleaved as a signal peptide. C27 carries the N-palmitoyl cysteine lipid modification. C27 carries the S-diacylglycerol cysteine lipid modification. Disordered regions lie at residues 297–316 (AAAA…AAAT) and 324–373 (VNAA…PDAH). Positions 332 to 363 (PSAQGTDAAAPAAPNDSAALPPLDAAGDPIAP) are enriched in low complexity.

This sequence belongs to the LpoA family. In terms of assembly, interacts with PBP1a.

The protein localises to the cell outer membrane. Regulator of peptidoglycan synthesis that is essential for the function of penicillin-binding protein 1A (PBP1a). The polypeptide is Penicillin-binding protein activator LpoA (Edwardsiella piscicida).